We begin with the raw amino-acid sequence, 272 residues long: D-aminoacyl-tRNA deacylase (272 aa).

It belongs to the DtdA deacylase family. Monomer. Requires Zn(2+) as cofactor.

The enzyme catalyses a D-aminoacyl-tRNA + H2O = a tRNA + a D-alpha-amino acid + H(+). It carries out the reaction glycyl-tRNA(Ala) + H2O = tRNA(Ala) + glycine + H(+). In terms of biological role, D-aminoacyl-tRNA deacylase with broad substrate specificity. By recycling D-aminoacyl-tRNA to D-amino acids and free tRNA molecules, this enzyme counteracts the toxicity associated with the formation of D-aminoacyl-tRNA entities in vivo. The protein is D-aminoacyl-tRNA deacylase of Thermococcus kodakarensis (strain ATCC BAA-918 / JCM 12380 / KOD1) (Pyrococcus kodakaraensis (strain KOD1)).